Here is a 310-residue protein sequence, read N- to C-terminus: MLDANKLQQAVDQAYTQFHSLNGGQNADYIPFLANVPGQLAAVAIVTSDGNVYSAGDSDYRFALESISKVCTLALALEDVGPQAVQDKVGADPTGLPFNSVIALELHGGKPLSPLVNAGAIATTSLINAENTEQRWQRILHIQQQLAGEQVALSDEVNQSEQTTNFHNRAIAWLLYSAGYLYCDAMEACDVYTRQCSTLINTIELATLGATLAAGGVNPLTHKRVLQADNVPYILAEMMMEGLYGRSGDWAYRVGLPGKSGVGGGILAVVPGVMGIAAFSPPLDEEGNSVRGQKMVASVAKQLGYNVFKG.

Substrate-binding residues include S66, N117, E161, N168, Y192, Y244, and V262. Residue K294 is modified to N6-acetyllysine.

Belongs to the glutaminase family. Homotetramer.

The catalysed reaction is L-glutamine + H2O = L-glutamate + NH4(+). The polypeptide is Glutaminase 1 (Escherichia coli O6:H1 (strain CFT073 / ATCC 700928 / UPEC)).